A 266-amino-acid polypeptide reads, in one-letter code: Gasdermin bGSDM (266 aa).

The S-palmitoyl cysteine moiety is linked to residue Cys6. Beta stranded transmembrane passes span 70–86, 99–117, 163–180, and 189–205; these read ISHS…AGNF, APKL…FSFS, AIDM…DVQA, and LGGK…TISF. The C-terminal region stretch occupies residues 245 to 266; it reads GAAEPYLLRRGQVLIVEDMQAT.

Belongs to the bacterial gasdermin family. In terms of assembly, monomer. As to quaternary structure, forms large, homooligomeric ring-shaped pores when inserted in membranes. In terms of processing, cleavage by the adjacently encoded protease (probably ISF6_0256) predicted to occur between Glu-244 and Gly-245 relieves autoinhibition, releasing the N-terminus which initiates loss of cell integrity. Palmitoylation helps stabilize the inactive state; may self palmitoylate. Palmitoylation plays a significant role in pore formation.

Its subcellular location is the cytoplasm. The protein resides in the cell inner membrane. With respect to regulation, the full-length protein before cleavage is inactive: intramolecular interactions between the N-terminal domain and the C-terminal region as well as the lipid modification, mediate autoinhibition. The pyroptosis-like-inducing activity is carried by the released N-terminal domain (Gasdermin bGSDM, N-terminus). Its function is as follows. Precursor of a pore-forming protein involved in defense against bacteriophages. Cleavage of this precursor by its dedicated, neighboring protease (probably ISF6_0256) releases the active moiety (gasdermin bGSDM, N-terminus) which inserts into membranes, forming pores and triggering cell death. Pore-forming protein that causes membrane permeabilization via a pyroptosis-like activity. Makes ring-like pores with an interior pore diameter of 300-400 Angstroms, when integrated in liposomes. The protein is Gasdermin bGSDM of Piscinibacter sakaiensis (Ideonella sakaiensis).